A 401-amino-acid polypeptide reads, in one-letter code: Argininosuccinate synthase (401 aa).

Residue 8–16 participates in ATP binding; the sequence is AYSGGLDTS. Tyr87 contacts L-citrulline. Residue Gly117 participates in ATP binding. Residues Thr119, Asn123, and Asp124 each contribute to the L-aspartate site. Asn123 serves as a coordination point for L-citrulline. Positions 127, 175, 259, and 271 each coordinate L-citrulline.

The protein belongs to the argininosuccinate synthase family. Type 1 subfamily. As to quaternary structure, homotetramer.

Its subcellular location is the cytoplasm. It carries out the reaction L-citrulline + L-aspartate + ATP = 2-(N(omega)-L-arginino)succinate + AMP + diphosphate + H(+). It functions in the pathway amino-acid biosynthesis; L-arginine biosynthesis; L-arginine from L-ornithine and carbamoyl phosphate: step 2/3. The protein is Argininosuccinate synthase of Pseudarthrobacter chlorophenolicus (strain ATCC 700700 / DSM 12829 / CIP 107037 / JCM 12360 / KCTC 9906 / NCIMB 13794 / A6) (Arthrobacter chlorophenolicus).